Here is a 429-residue protein sequence, read N- to C-terminus: Protein ORF66 (429 aa).

Belongs to the herpesviridae UL49 family. In terms of assembly, interacts with ORF34.

Its subcellular location is the host nucleus. The protein localises to the host cytoplasm. Functionally, participates in the expression of late viral mRNAs. The sequence is that of Protein ORF66 (ORF66) from Homo sapiens (Human).